A 135-amino-acid polypeptide reads, in one-letter code: Transcription antitermination protein NusB (135 aa).

Belongs to the NusB family.

Functionally, involved in transcription antitermination. Required for transcription of ribosomal RNA (rRNA) genes. Binds specifically to the boxA antiterminator sequence of the ribosomal RNA (rrn) operons. The sequence is that of Transcription antitermination protein NusB from Shewanella piezotolerans (strain WP3 / JCM 13877).